The chain runs to 67 residues: DNA-directed RNA polymerase subunit omega (67 aa).

This sequence belongs to the RNA polymerase subunit omega family. The RNAP catalytic core consists of 2 alpha, 1 beta, 1 beta' and 1 omega subunit. When a sigma factor is associated with the core the holoenzyme is formed, which can initiate transcription.

It catalyses the reaction RNA(n) + a ribonucleoside 5'-triphosphate = RNA(n+1) + diphosphate. Its function is as follows. Promotes RNA polymerase assembly. Latches the N- and C-terminal regions of the beta' subunit thereby facilitating its interaction with the beta and alpha subunits. The chain is DNA-directed RNA polymerase subunit omega from Legionella pneumophila (strain Paris).